The following is a 101-amino-acid chain: NAD(P)H-quinone oxidoreductase subunit 4L, chloroplastic (101 aa).

3 helical membrane passes run 2 to 22 (MLEHVLVLSAYLFSIGIYGLI), 32 to 52 (MCLELILNAVNMNLVTFSDFF), and 61 to 81 (IFSIFVIAIAAAEAAIGPAIV).

Belongs to the complex I subunit 4L family. As to quaternary structure, NDH is composed of at least 16 different subunits, 5 of which are encoded in the nucleus.

It localises to the plastid. It is found in the chloroplast thylakoid membrane. It catalyses the reaction a plastoquinone + NADH + (n+1) H(+)(in) = a plastoquinol + NAD(+) + n H(+)(out). It carries out the reaction a plastoquinone + NADPH + (n+1) H(+)(in) = a plastoquinol + NADP(+) + n H(+)(out). NDH shuttles electrons from NAD(P)H:plastoquinone, via FMN and iron-sulfur (Fe-S) centers, to quinones in the photosynthetic chain and possibly in a chloroplast respiratory chain. The immediate electron acceptor for the enzyme in this species is believed to be plastoquinone. Couples the redox reaction to proton translocation, and thus conserves the redox energy in a proton gradient. The polypeptide is NAD(P)H-quinone oxidoreductase subunit 4L, chloroplastic (Lotus japonicus (Lotus corniculatus var. japonicus)).